A 232-amino-acid polypeptide reads, in one-letter code: Probable metallo-hydrolase M6_Spy0554 (232 aa).

Positions 75, 77, 79, 80, 155, 174, and 215 each coordinate Zn(2+).

Zn(2+) serves as cofactor.

The sequence is that of Probable metallo-hydrolase M6_Spy0554 from Streptococcus pyogenes serotype M6 (strain ATCC BAA-946 / MGAS10394).